Consider the following 549-residue polypeptide: DNA ligase 1 (549 aa).

An ATP-binding site is contributed by Glu-212. Lys-214 serves as the catalytic N6-AMP-lysine intermediate. 6 residues coordinate ATP: Arg-219, Arg-234, Glu-264, Phe-310, Arg-387, and Lys-393.

This sequence belongs to the ATP-dependent DNA ligase family. It depends on Mg(2+) as a cofactor.

The enzyme catalyses ATP + (deoxyribonucleotide)n-3'-hydroxyl + 5'-phospho-(deoxyribonucleotide)m = (deoxyribonucleotide)n+m + AMP + diphosphate.. Its function is as follows. DNA ligase that seals nicks in double-stranded DNA during DNA replication, DNA recombination and DNA repair. The sequence is that of DNA ligase 1 from Methanosarcina barkeri (strain Fusaro / DSM 804).